The chain runs to 679 residues: G-protein-signaling modulator 2 (679 aa).

An important for interaction with NUMA1; INSC and FRMPD1 region spans residues 22–357 (ASCLELALEG…HLEISREVGD (336 aa)). 8 TPR repeats span residues 24–57 (CLEL…GTED), 62–95 (SAIY…ARTI), 102–135 (AKAS…SREL), 142–184 (ARAL…AVDL), 202–235 (GRAF…AKEF), 242–275 (RRAY…ARQL), 282–315 (AQSC…AQEL), and 322–355 (GRAC…SREV). Phosphoserine is present on residues Ser-408 and Ser-484. Thr-487 carries the phosphothreonine modification. The GoLoco 1 domain occupies 490 to 512 (DEGFFDLLRRFQSNRMDDQRCHL). A phosphoserine mark is found at Ser-540 and Ser-564. 3 GoLoco domains span residues 543 to 565 (TDEF…RASF), 594 to 616 (DEDF…RCAP), and 628 to 650 (DEDF…RVLL). GDP-binding residues include Arg-608, Arg-613, Arg-642, and Arg-647.

Belongs to the GPSM family. In terms of assembly, interacts with the dynein-dynactin complex; this interaction is inhibited in a PLK1-dependent manner. Part of a spindle orientation complex at least composed of GNAI1, GPSM2 and NUMA1. Interacts with LLGL2. Interacts (via TPR repeat region) with INSC/inscuteable. Interacts (via TPR repeat region) with NUMA1 (via C-terminus); this interaction is direct, inhibited in a PLK1-dependent manner and promotes spindle pole organization. INSC and NUMA1 compete for the same binding site, but INSC has higher affinity and can displace NUMA1 (in vitro). Interacts with GNAI2. Interacts (via GoLoco domains) with the GDP-bound form of GNAI1 and GNAI3; has much lower affinity for the GTP-bound form. Interaction with GDP-bound GNAI3 strongly enhances the affinity for NUMA1. Interacts (via TPR repeat region) with FRMPD1. INSC and FRMPD1 compete for the same binding site, but INSC has higher affinity and can displace FRMPD1 (in vitro). Interacts (via TPR repeat region) with FRMPD4. Identified in a complex with INSC and F2RL2/Par3. Interacts with TASOR. As to expression, detected in brain and liver (at protein level). Detected in brain, spleen, liver and testis, and at lower levels in heart, lung and kidney. Enriched in the ventricular zone of the developing central nervous systems. Expressed in proximal colon, ileum, ovary, Sertoli cells of the testis and granular cells within the cerebellum.

Its subcellular location is the cytoplasm. The protein resides in the cell cortex. It is found in the cytoskeleton. It localises to the spindle pole. The protein localises to the lateral cell membrane. Its function is as follows. Plays an important role in mitotic spindle pole organization via its interaction with NUMA1. Required for cortical dynein-dynactin complex recruitment during metaphase. Plays a role in metaphase spindle orientation. Plays an important role in asymmetric cell divisions. Has guanine nucleotide dissociation inhibitor (GDI) activity towards G(i) alpha proteins, such as GNAI1 and GNAI3, and thereby regulates their activity. The protein is G-protein-signaling modulator 2 (Gpsm2) of Mus musculus (Mouse).